The chain runs to 472 residues: Eukaryotic translation initiation factor 2 subunit 3 (472 aa).

Ala2 carries the N-acetylalanine; partial modification. Residue Ser16 is modified to Phosphoserine. The 210-residue stretch at 39–248 (QATINIGTIG…IVKKIPVPPR (210 aa)) folds into the tr-type G domain. The interval 48–55 (GHVAHGKS) is G1. A GTP-binding site is contributed by 51-56 (AHGKST). Residues 76–80 (NITIK) form a G2 region. The segment at 134 to 137 (DCPG) is G3. Residues 190–193 (NKID) and 225–227 (SAQ) each bind GTP. Residues 190–193 (NKID) are G4. Residues 225 to 227 (SAQ) form a G5 region. The tract at residues 457 to 469 (GQIRRGVTIKPTV) is interacts with CDC123.

This sequence belongs to the TRAFAC class translation factor GTPase superfamily. Classic translation factor GTPase family. EIF2G subfamily. In terms of assembly, eukaryotic translation initiation factor 2 eIF2 is a heterotrimeric complex composed of an alpha (EIF2S1), a beta (EIF2S2) and a gamma (EIF2S3) chain. eIF2 is member of the 43S pre-initiation complex (43S PIC). Interacts (via C-terminus) with CDC123; the interaction is direct. As to expression, expressed in testis, brain, liver and muscle.

It is found in the cytoplasm. The protein resides in the cytosol. The enzyme catalyses GTP + H2O = GDP + phosphate + H(+). In terms of biological role, member of the eIF2 complex that functions in the early steps of protein synthesis by forming a ternary complex with GTP and initiator tRNA. This complex binds to a 40S ribosomal subunit, followed by mRNA binding to form the 43S pre-initiation complex (43S PIC). Junction of the 60S ribosomal subunit to form the 80S initiation complex is preceded by hydrolysis of the GTP bound to eIF2 and release of an eIF2-GDP binary complex. In order for eIF2 to recycle and catalyze another round of initiation, the GDP bound to eIF2 must exchange with GTP by way of a reaction catalyzed by eIF-2B. The polypeptide is Eukaryotic translation initiation factor 2 subunit 3 (EIF2S3) (Homo sapiens (Human)).